The following is a 633-amino-acid chain: Terminal nucleotidyltransferase 4B (633 aa).

The interval 1-115 is disordered; the sequence is MFRSGERPLG…GGGRADGGGG (115 aa). The span at 25 to 34 shows a compositional bias: polar residues; the sequence is ETTNNNNNHH. 2 stretches are compositionally biased toward low complexity: residues 36–52 and 60–70; these read PAAW…ASPV and RPAAALPASES. Residues 87–98 are compositionally biased toward polar residues; the sequence is ASTYGLNYSLLQ. Gly residues predominate over residues 103–115; sequence RAAGGGRADGGGG. Residues aspartate 191 and aspartate 193 each contribute to the Mg(2+) site. 6 residues coordinate ATP: glycine 254, lysine 279, serine 297, tyrosine 298, asparagine 382, and arginine 386. Residues 322–382 enclose the PAP-associated domain; sequence NYGVLLIEFF…YIEDPLQPGN (61 aa). The segment at 484–633 is disordered; that stretch reads LGKCRSNASE…RDAPLSELCR (150 aa). Positions 492 to 519 are enriched in low complexity; it reads SEPLSKHSSNSSSGPVSSSSATQSSSSD. Lysine 531 participates in a covalent cross-link: Glycyl lysine isopeptide (Lys-Gly) (interchain with G-Cter in SUMO2). The segment covering 542–552 has biased composition (polar residues); that stretch reads RVGSQDVSLEV. Position 545 is a phosphoserine (serine 545). Residues lysine 558, lysine 573, and lysine 587 each participate in a glycyl lysine isopeptide (Lys-Gly) (interchain with G-Cter in SUMO2) cross-link. Polar residues predominate over residues 559–614; the sequence is MQSTQTTNTPNNANKSQHGSARLFRSSSKGFQGTAQTSHGALMTSKQHQGKSNTQY. The short motif at 618–624 is the Basic, involved in binding of the RNA primer element; that stretch reads KKRRHKR.

This sequence belongs to the DNA polymerase type-B-like family. In terms of assembly, component of a nucleolar TRAMP-like complex, an ATP-dependent exosome regulatory complex consisting of a helicase (MTREX), an oligadenylate polymerase (TENT4B or TENT4A), and a substrate specific RNA-binding factor (ZCCHC7 or ZCCHC8). Several TRAMP-like complexes exist with specific compositions and are associated with nuclear, or nucleolar RNA exosomes. Mg(2+) is required as a cofactor. The cofactor is Mn(2+).

The protein resides in the nucleus. Its subcellular location is the nucleolus. The protein localises to the cytoplasm. It carries out the reaction RNA(n) + ATP = RNA(n)-3'-adenine ribonucleotide + diphosphate. Its function is as follows. Terminal nucleotidyltransferase that catalyzes preferentially the transfer of ATP and GTP on RNA 3' poly(A) tail creating a heterogeneous 3' poly(A) tail leading to mRNAs stabilization by protecting mRNAs from active deadenylation. Also functions as a catalytic subunit of a TRAMP-like complex which has a poly(A) RNA polymerase activity and is involved in a post-transcriptional quality control mechanism. Polyadenylation with short oligo(A) tails is required for the degradative activity of the exosome on several of its nuclear RNA substrates. Doesn't need a cofactor for polyadenylation activity (in vitro). Plays a role in replication-dependent histone mRNA degradation, probably through terminal uridylation of mature histone mRNAs. May play a role in sister chromatid cohesion. The sequence is that of Terminal nucleotidyltransferase 4B from Mus musculus (Mouse).